A 61-amino-acid polypeptide reads, in one-letter code: Small ribosomal subunit protein uS14 (61 aa).

Cysteine 24, cysteine 27, cysteine 40, and cysteine 43 together coordinate Zn(2+).

It belongs to the universal ribosomal protein uS14 family. Zinc-binding uS14 subfamily. Part of the 30S ribosomal subunit. Contacts proteins S3 and S10. Zn(2+) serves as cofactor.

Its function is as follows. Binds 16S rRNA, required for the assembly of 30S particles and may also be responsible for determining the conformation of the 16S rRNA at the A site. The protein is Small ribosomal subunit protein uS14 of Halalkalibacterium halodurans (strain ATCC BAA-125 / DSM 18197 / FERM 7344 / JCM 9153 / C-125) (Bacillus halodurans).